A 193-amino-acid chain; its full sequence is uncharacterized protein (193 aa).

A helical membrane pass occupies residues 153 to 170 (WRYWAVIALIAAVLIYLY).

The protein resides in the membrane. This is an uncharacterized protein from Invertebrate iridescent virus 6 (IIV-6).